A 541-amino-acid polypeptide reads, in one-letter code: Probable inorganic phosphate transporter 1-8 (541 aa).

The Cytoplasmic portion of the chain corresponds to 1-28; it reads MARQEQQQHLQVLSALDAAKTQWYHFTA. A helical transmembrane segment spans residues 29–49; it reads IVVAGMGFFTDAYDLFCISLV. Over 50 to 74 the chain is Extracellular; that stretch reads TKLLGRIYYTDLAKENPGSLPPNVA. The helical transmembrane segment at 75–95 threads the bilayer; that stretch reads AAVNGVAFCGTLAGQLFFGWL. At 96 to 102 the chain is on the cytoplasmic side; that stretch reads GDKLGRK. A helical transmembrane segment spans residues 103 to 123; sequence SVYGMTLLMMVICSIASGLSF. At 124–126 the chain is on the extracellular side; the sequence is SHT. Residues 127-147 form a helical membrane-spanning segment; it reads PTSVMATLCFFRFWLGFGIGG. The Cytoplasmic portion of the chain corresponds to 148-168; that stretch reads DYPLSATIMSEYANKKTRGAF. A helical membrane pass occupies residues 169-189; sequence IAAVFAMQGFGILAGGIVTLI. At 190–215 the chain is on the extracellular side; it reads ISSAFRAGFPAPAYQDDRAGSTVRQA. A helical membrane pass occupies residues 216–236; sequence DYVWRIILMLGAMPALLTYYW. Residues 237-297 are Cytoplasmic-facing; the sequence is RMKMPETARY…GLFSRQFARR (61 aa). A helical transmembrane segment spans residues 298–318; it reads HGLHLVGTATTWFLLDIAFYS. At 319–353 the chain is on the extracellular side; sequence QNLFQKDIFTSINWIPKAKTMSALEEVFRIARAQT. The chain crosses the membrane as a helical span at residues 354-374; the sequence is LIALCGTVPGYWFTVFLIDIV. The Cytoplasmic portion of the chain corresponds to 375–376; the sequence is GR. The chain crosses the membrane as a helical span at residues 377-397; sequence FAIQLLGFFMMTVFMLGLAVP. Residues 398-404 lie on the Extracellular side of the membrane; the sequence is YHHWTTK. The helical transmembrane segment at 405–425 threads the bilayer; the sequence is GNHIGFVVMYAFTFFFANFGP. Over 426–447 the chain is Cytoplasmic; the sequence is NSTTFIVPAEIFPARLRSTCHG. A helical transmembrane segment spans residues 448–468; it reads ISAAAGKAGAIIGSFGFLYAA. The Extracellular portion of the chain corresponds to 469-486; sequence QDPHKPDAGYKPGIGVRN. A helical transmembrane segment spans residues 487-507; that stretch reads SLFVLAGCNLLGFICTFLVPE. The Cytoplasmic segment spans residues 508-541; sequence SKGKSLEEMSGEAEDDDDEVAAAGGGAAVRPQTA. The segment at 514–541 is disordered; it reads EEMSGEAEDDDDEVAAAGGGAAVRPQTA. The span at 516-527 shows a compositional bias: acidic residues; it reads MSGEAEDDDDEV.

It belongs to the major facilitator superfamily. Phosphate:H(+) symporter (TC 2.A.1.9) family.

The protein resides in the membrane. Its function is as follows. High-affinity transporter for external inorganic phosphate. This chain is Probable inorganic phosphate transporter 1-8 (PHT1-8), found in Oryza sativa subsp. japonica (Rice).